The following is a 329-amino-acid chain: Vomeronasal type-1 receptor 43 (329 aa).

Residues 1–32 (MSKILFFSPCSLFSHTMNKNSRLHTNSNIGNT) lie on the Extracellular side of the membrane. A helical membrane pass occupies residues 33–53 (FFSEIGIGITGNSFLLLYHIL). The Cytoplasmic segment spans residues 54 to 65 (KFIRGHRPRLTD). Residues 66–86 (LPIGLLSLIHLLMLLVAAFIA) traverse the membrane as a helical segment. Over 87–109 (TDIFISRRGWDDIICKFLVYLYR) the chain is Extracellular. C101 and C188 are joined by a disulfide. The helical transmembrane segment at 110-130 (VLRGLSLCTTSMLSVLQAIIL) threads the bilayer. The Cytoplasmic segment spans residues 131–147 (SPRSSCLSKFKHISLHH). Residues 148–168 (ILCAILFLSVLYMLISSQLLV) form a helical membrane-spanning segment. Residues 169-209 (SIIATPNLTTNDLTYVTQSCSILPLSYLVESINSTLLAIRE) are Extracellular-facing. N-linked (GlcNAc...) asparagine glycans are attached at residues N175 and N201. The chain crosses the membrane as a helical span at residues 210–230 (YFLISLMFLSTWYIVALLCMH). At 231 to 255 (RKQTQHLQETRLSLKKSPEQSATQT) the chain is on the cytoplasmic side. A helical membrane pass occupies residues 256-276 (ILMLMTFFVLMTIYDNIVSCL). The Extracellular portion of the chain corresponds to 277–285 (RTMLLNDPT). A helical membrane pass occupies residues 286-306 (SYSIELFMIHIYATVSPFVFM). Residues 307 to 329 (SNEKHIVNFLRSMGKRMINLNLH) lie on the Cytoplasmic side of the membrane.

The protein belongs to the G-protein coupled receptor 1 family.

It is found in the cell membrane. Functionally, putative pheromone receptor implicated in the regulation of social and reproductive behavior. The sequence is that of Vomeronasal type-1 receptor 43 (Vmn1r43) from Mus musculus (Mouse).